The primary structure comprises 233 residues: Protein DEHYDRATION-INDUCED 19 homolog 2 (233 aa).

The tract at residues 176–215 is disordered; that stretch reads DLHSDSSDNNFLLNKFPDDKTAERAEPSLSEKDQKERAQR. The span at 191–214 shows a compositional bias: basic and acidic residues; it reads FPDDKTAERAEPSLSEKDQKERAQ.

The protein belongs to the Di19 family.

The polypeptide is Protein DEHYDRATION-INDUCED 19 homolog 2 (DI19-2) (Oryza sativa subsp. japonica (Rice)).